Consider the following 261-residue polypeptide: 4-phosphopantoate--beta-alanine ligase (261 aa).

ATP-binding positions include Arg17, Arg39, 181–182 (DL), 187–188 (RS), and 199–200 (NI).

The protein belongs to the archaeal phosphopantothenate synthetase family. Homodimer.

It carries out the reaction (R)-4-phosphopantoate + beta-alanine + ATP = (R)-4'-phosphopantothenate + AMP + diphosphate + H(+). The protein operates within cofactor biosynthesis; coenzyme A biosynthesis. Catalyzes the condensation of (R)-4-phosphopantoate and beta-alanine to 4'-phosphopantothenate in the CoA biosynthesis pathway. This is 4-phosphopantoate--beta-alanine ligase from Thermococcus onnurineus (strain NA1).